The sequence spans 131 residues: Transcription antitermination protein NusB (131 aa).

This sequence belongs to the NusB family.

Its function is as follows. Involved in transcription antitermination. Required for transcription of ribosomal RNA (rRNA) genes. Binds specifically to the boxA antiterminator sequence of the ribosomal RNA (rrn) operons. The polypeptide is Transcription antitermination protein NusB (Campylobacter concisus (strain 13826)).